Consider the following 216-residue polypeptide: Imidazole glycerol phosphate synthase subunit HisH (216 aa).

The Glutamine amidotransferase type-1 domain occupies 2–216; sequence RVAIIDYGSG…LIANFLKWKP (215 aa). Residue Cys88 is the Nucleophile of the active site. Residues His196 and Glu198 contribute to the active site.

As to quaternary structure, heterodimer of HisH and HisF.

The protein resides in the cytoplasm. The catalysed reaction is 5-[(5-phospho-1-deoxy-D-ribulos-1-ylimino)methylamino]-1-(5-phospho-beta-D-ribosyl)imidazole-4-carboxamide + L-glutamine = D-erythro-1-(imidazol-4-yl)glycerol 3-phosphate + 5-amino-1-(5-phospho-beta-D-ribosyl)imidazole-4-carboxamide + L-glutamate + H(+). The enzyme catalyses L-glutamine + H2O = L-glutamate + NH4(+). Its pathway is amino-acid biosynthesis; L-histidine biosynthesis; L-histidine from 5-phospho-alpha-D-ribose 1-diphosphate: step 5/9. Its function is as follows. IGPS catalyzes the conversion of PRFAR and glutamine to IGP, AICAR and glutamate. The HisH subunit catalyzes the hydrolysis of glutamine to glutamate and ammonia as part of the synthesis of IGP and AICAR. The resulting ammonia molecule is channeled to the active site of HisF. The protein is Imidazole glycerol phosphate synthase subunit HisH of Brucella abortus biovar 1 (strain 9-941).